A 633-amino-acid chain; its full sequence is Beta-myrcene synthase TPS15CT (633 aa).

The transit peptide at 1–55 directs the protein to the chloroplast; the sequence is MHCMAVHQFSPSIVSSLPTISTYNNNHFCRFFTPKTSISPISKTKSKSSTCYPIQ. The (2E)-geranyl diphosphate site is built by R344, D381, D385, R525, and D528. Mg(2+) contacts are provided by D381 and D385. The DDXXD motif motif lies at 381–385; that stretch reads DDIYD. Mg(2+) is bound by residues D528, T532, and E536.

The protein belongs to the terpene synthase family. Tpsb subfamily. Mg(2+) serves as cofactor. Mn(2+) is required as a cofactor.

It localises to the plastid. It is found in the chloroplast. The catalysed reaction is (2E)-geranyl diphosphate = beta-myrcene + diphosphate. It participates in secondary metabolite biosynthesis; terpenoid biosynthesis. Functionally, involved in monoterpene (C10) olefins biosynthesis, constituants of cannabinoids and terpenoids-rich resins. Catalyzes strictly the conversion of (2E)-geranyl diphosphate to beta-myrcene. The chain is Beta-myrcene synthase TPS15CT from Cannabis sativa (Hemp).